A 118-amino-acid chain; its full sequence is Basic phospholipase A2 PA-12C (118 aa).

7 disulfides stabilise this stretch: C11–C71, C27–C117, C29–C45, C44–C98, C51–C91, C60–C84, and C78–C89. Y28, G30, and G32 together coordinate Ca(2+). Residue H48 is part of the active site. Residue D49 coordinates Ca(2+). Residue D92 is part of the active site.

It belongs to the phospholipase A2 family. Group I subfamily. D49 sub-subfamily. It depends on Ca(2+) as a cofactor. Expressed by the venom gland.

It localises to the secreted. It carries out the reaction a 1,2-diacyl-sn-glycero-3-phosphocholine + H2O = a 1-acyl-sn-glycero-3-phosphocholine + a fatty acid + H(+). Functionally, PLA2 catalyzes the calcium-dependent hydrolysis of the 2-acyl groups in 3-sn-phosphoglycerides. The chain is Basic phospholipase A2 PA-12C from Pseudechis australis (Mulga snake).